A 98-amino-acid polypeptide reads, in one-letter code: uncharacterized protein (98 aa).

Belongs to the HesB/IscA family.

This is an uncharacterized protein from Staphylococcus epidermidis (strain ATCC 35984 / DSM 28319 / BCRC 17069 / CCUG 31568 / BM 3577 / RP62A).